A 534-amino-acid chain; its full sequence is MSENKTRVDNAATGDIKHQGKDIFFAAVETTRMPMIVTDPNRPDNPIIFANRAFLEMTGYASEEIIGSNCRFLQGPDTDRTAVQSIRDAIDQRVDISTEILNYRKDGSSFWNALFISPVYNDAGELIYFFASQLDISRRRDAEEALRQAQKMEALGQLTGGIAHDFNNLLQVMGGYIDLIGSAAEKPVIDVQRVQRSVHHAKSAVERASTLTKQLLAFARKQKLQGRVLNLNGLVSTTEPLIERTFGPEVIIETDLDPALKNCRIDPTQAEVALLNIFINARDALIGRLNPKIFIETRNLVVDELANMSYDGLLPGRYVSIAVTDNGIGMPASIRDRVMDPFFTTKEEGKGSGLGLSMVYGFAKQSGGAARIYTEEGVGTTLRLYFPVDEAVLSKNDPPKASERRIGSSERILIVEDRPDVAELAKMVLDDYGYVSEIVLNAREALKRFEAGATYDLLFTDLIMPGGMNGVMLAREVRRRFPKVKVLLTTGYAESSIERTDIGGSEFEVVSKPCMPQDLARKVRQVLDGPNGIA.

A PAS domain is found at 20 to 93 (GKDIFFAAVE…QSIRDAIDQR (74 aa)). C70 is subject to S-4a-FMN cysteine. The region spanning 94–148 (VDISTEILNYRKDGSSFWNALFISPVYNDAGELIYFFASQLDISRRRDAEEALRQ) is the PAC domain. One can recognise a Histidine kinase domain in the interval 161-390 (GIAHDFNNLL…TLRLYFPVDE (230 aa)). At H164 the chain carries Phosphohistidine; by autocatalysis. The region spanning 411–527 (RILIVEDRPD…DLARKVRQVL (117 aa)) is the Response regulatory domain. D461 carries the post-translational modification 4-aspartylphosphate.

Post-translationally, FMN binds covalently to cysteine after exposure to blue light and this bond is spontaneously broken in the dark.

The catalysed reaction is ATP + protein L-histidine = ADP + protein N-phospho-L-histidine.. Its function is as follows. Photosensitive kinase and response regulator that is involved in increased bacterial virulence upon exposure to light. The sequence is that of Blue-light-activated protein from Pseudomonas syringae pv. syringae (strain B728a).